We begin with the raw amino-acid sequence, 596 residues long: Aspartate--tRNA(Asp/Asn) ligase (596 aa).

Glutamate 175 is a binding site for L-aspartate. The aspartate stretch occupies residues 199-202 (QQYK). Arginine 221 and histidine 454 together coordinate L-aspartate. An ATP-binding site is contributed by 221-223 (RDE). Position 488 (glutamate 488) interacts with ATP. Residue arginine 495 participates in L-aspartate binding. 540–543 (GVDR) provides a ligand contact to ATP.

Belongs to the class-II aminoacyl-tRNA synthetase family. Type 1 subfamily. As to quaternary structure, homodimer.

Its subcellular location is the cytoplasm. The catalysed reaction is tRNA(Asx) + L-aspartate + ATP = L-aspartyl-tRNA(Asx) + AMP + diphosphate. Aspartyl-tRNA synthetase with relaxed tRNA specificity since it is able to aspartylate not only its cognate tRNA(Asp) but also tRNA(Asn). Reaction proceeds in two steps: L-aspartate is first activated by ATP to form Asp-AMP and then transferred to the acceptor end of tRNA(Asp/Asn). The sequence is that of Aspartate--tRNA(Asp/Asn) ligase from Bartonella bacilliformis (strain ATCC 35685 / KC583 / Herrer 020/F12,63).